A 322-amino-acid chain; its full sequence is 4-hydroxythreonine-4-phosphate dehydrogenase (322 aa).

A substrate-binding site is contributed by threonine 132. Histidine 160, histidine 205, and histidine 260 together coordinate a divalent metal cation. Residues lysine 268, asparagine 277, and arginine 286 each contribute to the substrate site.

Belongs to the PdxA family. Homodimer. It depends on Zn(2+) as a cofactor. Requires Mg(2+) as cofactor. Co(2+) serves as cofactor.

It localises to the cytoplasm. It carries out the reaction 4-(phosphooxy)-L-threonine + NAD(+) = 3-amino-2-oxopropyl phosphate + CO2 + NADH. The protein operates within cofactor biosynthesis; pyridoxine 5'-phosphate biosynthesis; pyridoxine 5'-phosphate from D-erythrose 4-phosphate: step 4/5. Catalyzes the NAD(P)-dependent oxidation of 4-(phosphooxy)-L-threonine (HTP) into 2-amino-3-oxo-4-(phosphooxy)butyric acid which spontaneously decarboxylates to form 3-amino-2-oxopropyl phosphate (AHAP). This Xanthomonas oryzae pv. oryzae (strain PXO99A) protein is 4-hydroxythreonine-4-phosphate dehydrogenase.